A 337-amino-acid polypeptide reads, in one-letter code: Na(+)/H(+) exchange regulatory cofactor NHE-RF2 (337 aa).

The PDZ 1 domain occupies 11–91 (LCRLVRGEQG…QTQLLVVDKE (81 aa)). Residues 112–145 (LPPAHNPWEPKPDWACSGSLGSDTGQKDVNGPPR) are disordered. Phosphoserine occurs at positions 130, 183, 186, 254, 269, 280, and 303. One can recognise a PDZ 2 domain in the interval 151 to 231 (LCHLRRGPQG…EARLLVVDPE (81 aa)). Residues 242–337 (VPTEEHVEGP…NRKREIFSNF (96 aa)) are disordered. Residues 255 to 275 (PVTNGTSPAQLNGGSVCSSRS) show a composition bias toward polar residues. A compositionally biased stretch (basic and acidic residues) spans 327–337 (WNRKREIFSNF).

As to quaternary structure, homodimer, and heterodimer with NHERF1. Binds PDZK1. Interacts with SRY. Binds ADRB2, SLC9A3, P2RY1, P2YR2, RDX and LPAR2. Interacts with MCC. Found in a complex with EZR, PODXL and NHERF2. Interacts (via the PDZ domains) with PODXL (via the C-terminal PDZ-binding motif DTHL); interaction is detected in glomerular epithelium cells. Interacts with SGK1 and KCNJ1/ROMK1. Interacts (via the PDZ domains) with SLC26A6.

The protein localises to the endomembrane system. The protein resides in the nucleus. Its subcellular location is the apical cell membrane. In terms of biological role, scaffold protein that connects plasma membrane proteins with members of the ezrin/moesin/radixin family and thereby helps to link them to the actin cytoskeleton and to regulate their surface expression. Necessary for cAMP-mediated phosphorylation and inhibition of SLC9A3. May also act as scaffold protein in the nucleus. This chain is Na(+)/H(+) exchange regulatory cofactor NHE-RF2 (Nherf2), found in Mus musculus (Mouse).